The following is a 227-amino-acid chain: PKHD-type hydroxylase A1S_0473 (227 aa).

The Fe2OG dioxygenase domain maps to 78–178 (KIIPPLFNRY…RFASFFWVQS (101 aa)). Fe cation-binding residues include histidine 96, aspartate 98, and histidine 159. Residue arginine 169 participates in 2-oxoglutarate binding.

It depends on Fe(2+) as a cofactor. L-ascorbate serves as cofactor.

This is PKHD-type hydroxylase A1S_0473 from Acinetobacter baumannii (strain ATCC 17978 / DSM 105126 / CIP 53.77 / LMG 1025 / NCDC KC755 / 5377).